The following is a 450-amino-acid chain: Protein indeterminate-domain 13 (450 aa).

Phosphoserine is present on Ser54. 2 consecutive C2H2-type zinc fingers follow at residues 64–86 (FFCE…KRGH) and 106–136 (YICP…SRKH). Positions 128 to 135 (IKKHFSRK) match the Nuclear localization signal motif. A C2H2-type 2; degenerate zinc finger spans residues 141-165 (WKCDKCSKKYAVISDWKAHNKICGS). The Zn(2+) site is built by Cys143, Cys146, His159, Cys163, Cys170, Cys172, His185, and Cys189. The CCHC-type 2; atypical zinc-finger motif lies at 168–191 (FRCDCGTLFSRKDSFISHRSFCDV). Residues 178-190 (RKDSFISHRSFCD) form an SHR-binding region. The span at 248–263 (FGQKFTNSNPTQQQPN) shows a compositional bias: polar residues. The disordered stretch occupies residues 248–280 (FGQKFTNSNPTQQQPNALALSSPPSPRSTSDSV).

Its subcellular location is the nucleus. Probable transcription factor. This is Protein indeterminate-domain 13 from Arabidopsis thaliana (Mouse-ear cress).